The chain runs to 193 residues: Potassium-transporting ATPase KdpC subunit (193 aa).

The chain crosses the membrane as a helical span at residues 14-34; sequence ITFTFLVLCGLVYPLIVTGIA.

Belongs to the KdpC family. In terms of assembly, the system is composed of three essential subunits: KdpA, KdpB and KdpC.

The protein resides in the cell membrane. Its function is as follows. Part of the high-affinity ATP-driven potassium transport (or Kdp) system, which catalyzes the hydrolysis of ATP coupled with the electrogenic transport of potassium into the cytoplasm. This subunit acts as a catalytic chaperone that increases the ATP-binding affinity of the ATP-hydrolyzing subunit KdpB by the formation of a transient KdpB/KdpC/ATP ternary complex. This Bacillus mycoides (strain KBAB4) (Bacillus weihenstephanensis) protein is Potassium-transporting ATPase KdpC subunit.